Reading from the N-terminus, the 147-residue chain is Small ribosomal subunit protein eS19 (147 aa).

It belongs to the eukaryotic ribosomal protein eS19 family. As to quaternary structure, component of the small ribosomal subunit.

The protein localises to the cytoplasm. It localises to the nucleus. In terms of biological role, component of the small ribosomal subunit. The ribosome is a large ribonucleoprotein complex responsible for the synthesis of proteins in the cell. Required for pre-rRNA processing and maturation of 40S ribosomal subunits. In Gillichthys mirabilis (Long-jawed mudsucker), this protein is Small ribosomal subunit protein eS19 (rps19).